The primary structure comprises 476 residues: Glycogen synthase (476 aa).

Lysine 15 contributes to the ADP-alpha-D-glucose binding site.

It belongs to the glycosyltransferase 1 family. Bacterial/plant glycogen synthase subfamily.

The enzyme catalyses [(1-&gt;4)-alpha-D-glucosyl](n) + ADP-alpha-D-glucose = [(1-&gt;4)-alpha-D-glucosyl](n+1) + ADP + H(+). It participates in glycan biosynthesis; glycogen biosynthesis. In terms of biological role, synthesizes alpha-1,4-glucan chains using ADP-glucose. The protein is Glycogen synthase of Bacillus cereus (strain Q1).